A 354-amino-acid chain; its full sequence is Methionine import ATP-binding protein MetN (354 aa).

An ABC transporter domain is found at 8 to 250 (LDHIDITFRQ…PKEALTQEFI (243 aa)). 42-49 (GYSGAGKS) contacts ATP.

Belongs to the ABC transporter superfamily. Methionine importer (TC 3.A.1.24) family. As to quaternary structure, the complex is composed of two ATP-binding proteins (MetN), two transmembrane proteins (MetI) and a solute-binding protein (MetQ).

The protein localises to the cell membrane. The catalysed reaction is L-methionine(out) + ATP + H2O = L-methionine(in) + ADP + phosphate + H(+). It carries out the reaction D-methionine(out) + ATP + H2O = D-methionine(in) + ADP + phosphate + H(+). Functionally, part of the ABC transporter complex MetNIQ involved in methionine import. Responsible for energy coupling to the transport system. This is Methionine import ATP-binding protein MetN from Streptococcus pyogenes serotype M1.